Here is a 684-residue protein sequence, read N- to C-terminus: Extracellular lipase (684 aa).

An N-terminal signal peptide occupies residues M1–A48. Disordered stretches follow at residues S321–G405 and Q462–S493. Positions A385–G405 are enriched in basic and acidic residues. Residue S568 is the Nucleophile of the active site.

The protein belongs to the AB hydrolase superfamily. Lipase family. In terms of assembly, monomer.

The protein resides in the secreted. The catalysed reaction is a triacylglycerol + H2O = a diacylglycerol + a fatty acid + H(+). The optimum chain lengths for the acyl moiety is C6 for ester hydrolysis and C6 and C8 for triacylglycerol hydrolysis. In Aeromonas hydrophila, this protein is Extracellular lipase.